Reading from the N-terminus, the 196-residue chain is GTP cyclohydrolase-2 (196 aa).

49–53 (RVHSE) is a GTP binding site. 3 residues coordinate Zn(2+): Cys-54, Cys-65, and Cys-67. Residues Gln-70, 92–94 (EGR), and Thr-114 each bind GTP. The active-site Proton acceptor is the Asp-126. The Nucleophile role is filled by Arg-128. GTP is bound by residues Thr-149 and Lys-154.

Belongs to the GTP cyclohydrolase II family. As to quaternary structure, homodimer. Zn(2+) serves as cofactor.

It catalyses the reaction GTP + 4 H2O = 2,5-diamino-6-hydroxy-4-(5-phosphoribosylamino)-pyrimidine + formate + 2 phosphate + 3 H(+). It functions in the pathway cofactor biosynthesis; riboflavin biosynthesis; 5-amino-6-(D-ribitylamino)uracil from GTP: step 1/4. In terms of biological role, catalyzes the conversion of GTP to 2,5-diamino-6-ribosylamino-4(3H)-pyrimidinone 5'-phosphate (DARP), formate and pyrophosphate. The chain is GTP cyclohydrolase-2 from Escherichia coli O45:K1 (strain S88 / ExPEC).